Reading from the N-terminus, the 202-residue chain is Interleukin-17D (202 aa).

Residues 1-15 (MLVAGFLLALPPSWA) form the signal peptide. The disordered stretch occupies residues 65–85 (QARNASCPAGGRPADRRFRPP). 2 N-linked (GlcNAc...) asparagine glycosylation sites follow: asparagine 68 and asparagine 181.

It belongs to the IL-17 family. As to expression, expressed preferentially in adipose, skeletal muscle and CNS.

The protein resides in the secreted. In terms of biological role, induces expression of IL6, CXCL8/IL8, and CSF2/GM-CSF from endothelial cells. This chain is Interleukin-17D (IL17D), found in Homo sapiens (Human).